The chain runs to 183 residues: Guanylate kinase (183 aa).

In terms of domain architecture, Guanylate kinase-like spans G4–F182. G11–G18 is an ATP binding site.

This sequence belongs to the guanylate kinase family.

It localises to the cytoplasm. The enzyme catalyses GMP + ATP = GDP + ADP. It catalyses the reaction dZMP + ATP = dZDP + ADP. It participates in purine metabolism. Its function is as follows. Essential for recycling GMP and indirectly, cGMP. Functionally, (Microbial infection) Catalyzes the phosphorylation of dZMP to dZDP, when the bacterium is infected by a phage that produces the substrate for the synthesis of dZTP (2- amino-2'-deoxyadenosine 5'-triphosphate), which is then used by the phage as a DNA polymerase substrate. The protein is Guanylate kinase of Synechococcus sp. (strain ATCC 27144 / PCC 6301 / SAUG 1402/1) (Anacystis nidulans).